The chain runs to 446 residues: MAKNKALFECQACGNQQSKWLGKCPDCGAWDSFVELKAEQIKVLKELAQVSMKTSEAVCIEDVELEHFTRYSTDDNELDLVLGGGLVEGSLVLIGGSPGVGKSTLLLKIASNLAKQGKKVLYVSGEESKAQIKLRADRLEANTPNLFLLTELCLENILEELHKKDYSILIVDSIQTLYSNKITSAAGSITQVREITFELMRVSKAYNISTFIIGHITKEGAIAGPRVLEHMVDVVLYFEGDATKEIRLLRGFKNRFGGTNEVGIFEMTAKGLISAKDLANRFFTRGKAISGSALGVVMEGSRALVLEVQALVCESSYPKRSATGYEKNRLDMLLALLERKLEIPLGHYDVFVNISGGVKVSETAADLAVVAAIISSFKNRPLSKDSIFIGELSLNGEIREVFSLDTRLKEAKMQKFKNAIVPSKPLEDIGLKCFVAKELSQVLEWM.

The segment at 10-27 (CQACGNQQSKWLGKCPDC) adopts a C4-type zinc-finger fold. 96–103 (GSPGVGKS) contacts ATP. The RadA KNRFG motif motif lies at 253-257 (KNRFG). The segment at 349-446 (DVFVNISGGV…KELSQVLEWM (98 aa)) is lon-protease-like.

Belongs to the RecA family. RadA subfamily.

In terms of biological role, DNA-dependent ATPase involved in processing of recombination intermediates, plays a role in repairing DNA breaks. Stimulates the branch migration of RecA-mediated strand transfer reactions, allowing the 3' invading strand to extend heteroduplex DNA faster. Binds ssDNA in the presence of ADP but not other nucleotides, has ATPase activity that is stimulated by ssDNA and various branched DNA structures, but inhibited by SSB. Does not have RecA's homology-searching function. The polypeptide is DNA repair protein RadA (Campylobacter jejuni subsp. jejuni serotype O:2 (strain ATCC 700819 / NCTC 11168)).